A 172-amino-acid polypeptide reads, in one-letter code: Nicotinamide-nucleotide adenylyltransferase (172 aa).

It belongs to the archaeal NMN adenylyltransferase family.

The protein localises to the cytoplasm. It catalyses the reaction beta-nicotinamide D-ribonucleotide + ATP + H(+) = diphosphate + NAD(+). It participates in cofactor biosynthesis; NAD(+) biosynthesis; NAD(+) from nicotinamide D-ribonucleotide: step 1/1. This is Nicotinamide-nucleotide adenylyltransferase from Methanococcus vannielii (strain ATCC 35089 / DSM 1224 / JCM 13029 / OCM 148 / SB).